The chain runs to 315 residues: Zinc finger transcription factor ref-2 (315 aa).

The segment at 83 to 112 (VQCLWETNGQVCMHVCQNSGELSTHISSNH) adopts a C2H2-type 1; atypical zinc-finger fold. The segment at 124 to 146 (KGCDREFKMFKAKYKLVNHMRVH) adopts a C2H2-type 2; degenerate zinc-finger fold. 3 C2H2-type zinc fingers span residues 152 to 174 (FLCD…KRIH), 180 to 204 (FQCT…MHVH), and 210 to 234 (YSCM…TKVH). The disordered stretch occupies residues 225 to 270 (SSLRKHTKVHENEKKSQLSPEHDESSDSGNASIGTPTTDESLTFSP). Over residues 233–249 (VHENEKKSQLSPEHDES) the composition is skewed to basic and acidic residues. Positions 251–270 (DSGNASIGTPTTDESLTFSP) are enriched in polar residues.

As to quaternary structure, interacts with TCF transcription factor pop-1; the interaction is direct and facilitates transcriptional activation; transcription may be repressed by beta-catenin/sys-1.

Its subcellular location is the nucleus. The protein localises to the cytoplasm. In terms of biological role, transcription factor. Modulates expression of target genes by binding to regulatory elements. Required for normal cell division timing and cell positioning in anterior lineages, acting in a cell-autonomous manner. Required for development, fusion and fate of cells of the ventral epidermis, the Pn.p cells, during larval development; acts in concert with homeobox genes lin-39 and mab-5. Required for the specification of the AIY interneuron. In complex with TCF transcription factor pop-1, positively modulates expression of LIM/homeobox protein ttx-3 in anterior daughter cells of the SMDD/AIY neuron lineage. This chain is Zinc finger transcription factor ref-2, found in Caenorhabditis elegans.